Consider the following 121-residue polypeptide: MKLFMVLVASFAFAVALPSKKREETAENELTGDLQEAAQPMIYAVAFPEIRASCVIGWKQQGAKCERDCECCGVAATCITRSTNSLPGFCGYRQTPNVLGQGLLYTADTISNGLSAIFCAA.

The first 16 residues, 1–16 (MKLFMVLVASFAFAVA), serve as a signal peptide directing secretion. 4 disulfide bridges follow: C54–C72, C65–C78, C69–C119, and C71–C90.

This sequence belongs to the neurotoxin 03 (Tx2) family. 03 subfamily. As to expression, expressed by the venom gland.

It localises to the secreted. Functionally, ion channel inhibitor. In Trittame loki (Brush-footed trapdoor spider), this protein is U15-barytoxin-Tl1b.